Consider the following 1141-residue polypeptide: Envelopment polyprotein (1141 aa).

Positions 1 to 18 (MGRLYLIVLGVLITATAG) are cleaved as a signal peptide. At 19 to 483 (FPRSVHELKI…HSLAVELCVP (465 aa)) the chain is on the lumenal side. 10 cysteine pairs are disulfide-bonded: Cys-30–Cys-158, Cys-64–Cys-164, Cys-113–Cys-135, Cys-140–Cys-145, Cys-182–Cys-192, Cys-217–Cys-253, Cys-242–Cys-357, Cys-382–Cys-441, Cys-386–Cys-395, and Cys-458–Cys-481. An N-linked (GlcNAc...) asparagine; by host glycan is attached at Asn-141. Asn-353 carries N-linked (GlcNAc...) asparagine; by host glycosylation. Asn-405 carries N-linked (GlcNAc...) asparagine; by host glycosylation. Residues 484-506 (GIHGWATIALVITFCFGWLLIPT) traverse the membrane as a helical segment. Topologically, residues 507–633 (TTMVVLKCLR…LGVFRYKSRC (127 aa)) are cytoplasmic. Residues 522 to 539 (CSHYSTESKFKVILEKVK) are binding to the ribonucleoprotein. 2 CCHC-type zinc fingers span residues 551–571 (CDIC…KKSC) and 576–597 (CPYC…YAVC). Binding to the ribonucleoprotein regions lie at residues 594 to 611 (YAVC…KKSL), 598 to 609 (KLTGRFHEALKK), and 617 to 631 (QRGC…RYKS). The ITAM domain occupies 617-640 (QRGCYRTLGVFRYKSRCYVGLVWM). Phosphotyrosine is present on residues Tyr-621 and Tyr-634. The short motif at 621–624 (YRTL) is the YxxL element. A helical membrane pass occupies residues 634 to 654 (YVGLVWMCLLTLELIVWAASA). Over 655-1110 (DTPLLEPGWS…EWLLGILNGN (456 aa)) the chain is Lumenal. Disulfide bonds link Cys-741-Cys-776, Cys-745-Cys-783, Cys-757-Cys-890, Cys-771-Cys-901, Cys-786-Cys-909, Cys-812-Cys-821, Cys-829-Cys-838, and Cys-869-Cys-873. The fusion loop stretch occupies residues 763 to 783 (YQYETSWSCNPPDCPGVGTGC). N-linked (GlcNAc...) asparagine; by host glycosylation is present at Asn-933. Intrachain disulfides connect Cys-975–Cys-1005, Cys-998–Cys-1050, Cys-1015–Cys-1020, Cys-1051–Cys-1056, and Cys-1090–Cys-1094. A helical transmembrane segment spans residues 1111–1131 (WVVVAVLVIILLISIFLFSFF). Positions 1127–1141 (LFSFFCPIRSHKKQL) are binding to the ribonucleoprotein. Topologically, residues 1132–1141 (CPIRSHKKQL) are cytoplasmic.

Belongs to the hantavirus envelope glycoprotein family. Homodimer. Homotetramer; forms heterotetrameric Gn-Gc spikes in the pre-fusion conformation. Interacts (via C-terminus) with the nucleoprotein. Interacts with host TUFM; this interaction contributes to the virus-induced degradation of mitochondria by autophagy, which leads to degradation of host MAVS and inhibition of type I interferon (IFN) responses. Interacts with host MAP1LC3B; this interaction contributes to the virus-induced degradation of mitochondria by autophagy, which leads to degradation of host MAVS and inhibition of type I interferon (IFN) responses. As to quaternary structure, homodimer. Homotetramer; forms heterotetrameric Gn-Gc spikes in the pre-fusion conformation. Homotrimer; forms homotrimer in the post-fusion conformation at acidic pH. Interacts (via C-terminus) with the nucleoprotein. Post-translationally, envelope polyprotein precursor is quickly cleaved in vivo just after synthesis, presumably by host signal peptidase.

The protein localises to the virion membrane. It is found in the host cell surface. The protein resides in the host Golgi apparatus membrane. It localises to the host endoplasmic reticulum membrane. Its subcellular location is the host mitochondrion. Functionally, forms homotetramers with glycoprotein C at the surface of the virion. Attaches the virion to host cell receptors including integrin ITGAV/ITGB3. This attachment induces virion internalization predominantly through clathrin-dependent endocytosis. Mediates the assembly and budding of infectious virus particles through its interaction with the nucleocapsid protein and the viral genome. May dysregulate normal immune and endothelial cell responses through an ITAM motif. Translocates to mitochondria, binds to host TUFM and recruits MAP1LC3B. These interactions induce mitochondrial autophagy and therefore destruction of host MAVS leading to inhibition of type I interferon (IFN) responses. Concomitant breakdown of glycoprotein N is apparently prevented by the nucleoprotein that may inhibit Gn-stimulated autophagosome-lysosome fusion. Interacts with the viral genomic RNA. Its function is as follows. Forms homotetramers with glycoprotein N at the surface of the virion. Attaches the virion to host cell receptors including integrin ITGAV/ITGB3. This attachment induces virion internalization predominantly through clathrin-dependent endocytosis. Class II fusion protein that promotes fusion of viral membrane with host endosomal membrane after endocytosis of the virion. This is Envelopment polyprotein (GP) from Homo sapiens (Human).